The sequence spans 252 residues: Triosephosphate isomerase (252 aa).

A substrate-binding site is contributed by 10–12; it reads NWK. The Electrophile role is filled by His-96. Glu-168 functions as the Proton acceptor in the catalytic mechanism. Residues Gly-174, Ser-213, and 234–235 each bind substrate; that span reads GG.

The protein belongs to the triosephosphate isomerase family. As to quaternary structure, homodimer.

It localises to the cytoplasm. It carries out the reaction D-glyceraldehyde 3-phosphate = dihydroxyacetone phosphate. The protein operates within carbohydrate biosynthesis; gluconeogenesis. Its pathway is carbohydrate degradation; glycolysis; D-glyceraldehyde 3-phosphate from glycerone phosphate: step 1/1. Functionally, involved in the gluconeogenesis. Catalyzes stereospecifically the conversion of dihydroxyacetone phosphate (DHAP) to D-glyceraldehyde-3-phosphate (G3P). In Idiomarina loihiensis (strain ATCC BAA-735 / DSM 15497 / L2-TR), this protein is Triosephosphate isomerase.